The following is a 160-amino-acid chain: 3-hydroxyacyl-[acyl-carrier-protein] dehydratase FabZ (160 aa).

Residue histidine 58 is part of the active site.

It belongs to the thioester dehydratase family. FabZ subfamily.

The protein localises to the cytoplasm. It catalyses the reaction a (3R)-hydroxyacyl-[ACP] = a (2E)-enoyl-[ACP] + H2O. Its function is as follows. Involved in unsaturated fatty acids biosynthesis. Catalyzes the dehydration of short chain beta-hydroxyacyl-ACPs and long chain saturated and unsaturated beta-hydroxyacyl-ACPs. The chain is 3-hydroxyacyl-[acyl-carrier-protein] dehydratase FabZ from Ruegeria sp. (strain TM1040) (Silicibacter sp.).